The chain runs to 183 residues: Protein jagunal homolog 1 (183 aa).

The Cytoplasmic portion of the chain corresponds to 1 to 39; sequence MASRAGPRAAGTDGSDFQHRERVAMHYQMSVTLKYEIKK. Phosphoserine is present on serine 3. Residues 40–60 traverse the membrane as a helical segment; that stretch reads LIYVHLVIWLLLVAKMSVGHL. Over 61-71 the chain is Lumenal; the sequence is RLLSHDQVAMP. A helical transmembrane segment spans residues 72 to 92; it reads YQWEYPYLLSILPSLLGLLSF. The Cytoplasmic segment spans residues 93–96; it reads PRNN. The helical transmembrane segment at 97–117 threads the bilayer; the sequence is ISYLVLSMISMGLFSIAPLIY. Over 118-137 the chain is Lumenal; the sequence is GSMEMFPAAQQLYRHGKAYR. A helical membrane pass occupies residues 138–158; it reads FLFGFSAVSIMYLVLVLAVQV. Over 159 to 183 the chain is Cytoplasmic; it reads HAWQLYYSKKLLDSWFTSTQEKKHK.

Belongs to the jagunal family. In terms of assembly, interacts with COPA, COPB2 and COPG2. Ubiquitously expressed.

The protein resides in the endoplasmic reticulum membrane. Functionally, endoplasmic reticulum transmembrane protein involved in vesicle-mediated transport, which is required for neutrophil function. Required for vesicle-mediated transport; it is however unclear whether it is involved in early secretory pathway or intracellular protein transport. Acts as a regulator of neutrophil function, probably via its role in vesicle-mediated transport: required for defense against fungal pathogens and for granulocyte colony-stimulating factor (GM-CSF) signaling pathway; possibly by regulating glycosylation and/or targeting of proteins contributing to the viability and migration of neutrophils. This chain is Protein jagunal homolog 1, found in Homo sapiens (Human).